We begin with the raw amino-acid sequence, 84 residues long: uncharacterized protein (84 aa).

This is an uncharacterized protein from Schizosaccharomyces pombe (strain 972 / ATCC 24843) (Fission yeast).